The primary structure comprises 225 residues: Phosphatidylserine decarboxylase proenzyme (225 aa).

Catalysis depends on Ser-195, which acts as the Schiff-base intermediate with substrate; via pyruvic acid. Ser-195 bears the Pyruvic acid (Ser); by autocatalysis mark.

The protein belongs to the phosphatidylserine decarboxylase family. PSD-A subfamily. Heterodimer of a large membrane-associated beta subunit and a small pyruvoyl-containing alpha subunit. Requires pyruvate as cofactor. Is synthesized initially as an inactive proenzyme. Formation of the active enzyme involves a self-maturation process in which the active site pyruvoyl group is generated from an internal serine residue via an autocatalytic post-translational modification. Two non-identical subunits are generated from the proenzyme in this reaction, and the pyruvate is formed at the N-terminus of the alpha chain, which is derived from the carboxyl end of the proenzyme. The post-translation cleavage follows an unusual pathway, termed non-hydrolytic serinolysis, in which the side chain hydroxyl group of the serine supplies its oxygen atom to form the C-terminus of the beta chain, while the remainder of the serine residue undergoes an oxidative deamination to produce ammonia and the pyruvoyl prosthetic group on the alpha chain.

Its subcellular location is the cell membrane. The enzyme catalyses a 1,2-diacyl-sn-glycero-3-phospho-L-serine + H(+) = a 1,2-diacyl-sn-glycero-3-phosphoethanolamine + CO2. Its pathway is phospholipid metabolism; phosphatidylethanolamine biosynthesis; phosphatidylethanolamine from CDP-diacylglycerol: step 2/2. In terms of biological role, catalyzes the formation of phosphatidylethanolamine (PtdEtn) from phosphatidylserine (PtdSer). This Gluconacetobacter diazotrophicus (strain ATCC 49037 / DSM 5601 / CCUG 37298 / CIP 103539 / LMG 7603 / PAl5) protein is Phosphatidylserine decarboxylase proenzyme.